The chain runs to 615 residues: MTHILGISAYYHDSAAALVKDGVIVAAVQEERFTRKKHDASFPTQGINYCLGEAGISLKEVDYIVFYEKPLVTFERLLETYLAFAPRGLRSFIAAMSAWLQEKLYLKTVLKKALAELGDCKTKDLPPLLFNEHHQSHAASAFFPSPFDEAAVLCMDGVGEWATTSLWSGQGNQLTPHWEIHFPHSLGLLYSAFTYYTGFKVNSGEYKLMGLAPYGEPKYVDLILDNLLDLKADGTFRLNMAYFNYATGLTMTNKKFADLFGAPRRSPESPLTQREMDIAASIQVVTEKVVLRLGNTVYEELGLENLCLAGGVALNCVANGRLLREGKFKNIWIQPAAGDAGGAIGAALSVWHQYLQNERMVRKPDAMAGSYLGPRFTNEEIETYLKGPAVQAVYDYYSDEDLFGKVAHILAGGNVVGWFQGRMEFGPRALGGRSIIGDPRNTTMQSVMNLKIKYRESFRPFAPSVLAEKVGDYFELDQPSPYMLIVADVREELRLPLTPEQEQLFGIEKLNIPRSQLPAITHVDNSARIQTVHPETNPRYYQLLRQFEALTDCGVLVNTSFNVRGEPIVCTPEDAYRCFMRTEMDYLVLENFVLAKTAQPQREQDQKWQEEFELD.

It belongs to the NodU/CmcH family.

This is an uncharacterized protein from Synechocystis sp. (strain ATCC 27184 / PCC 6803 / Kazusa).